The sequence spans 490 residues: Cysteine--tRNA ligase (490 aa).

Cys-43 lines the Zn(2+) pocket. Residues Met-45 to His-55 carry the 'HIGH' region motif. Positions Val-177–Lys-204 are disordered. The segment covering Ser-186 to Lys-204 has biased composition (basic and acidic residues). Cys-228, His-253, and Glu-257 together coordinate Zn(2+). The short motif at Lys-284 to Ser-288 is the 'KMSKS' region element. Residue Lys-287 coordinates ATP.

The protein belongs to the class-I aminoacyl-tRNA synthetase family. Monomer. Zn(2+) is required as a cofactor.

It is found in the cytoplasm. It catalyses the reaction tRNA(Cys) + L-cysteine + ATP = L-cysteinyl-tRNA(Cys) + AMP + diphosphate. The protein is Cysteine--tRNA ligase of Cutibacterium acnes (strain DSM 16379 / KPA171202) (Propionibacterium acnes).